Reading from the N-terminus, the 296-residue chain is Ribosomal RNA small subunit methyltransferase J (296 aa).

S-adenosyl-L-methionine is bound at residue Asp-205.

This sequence belongs to the methyltransferase superfamily. RsmJ family.

The protein localises to the cytoplasm. It carries out the reaction guanosine(1516) in 16S rRNA + S-adenosyl-L-methionine = N(2)-methylguanosine(1516) in 16S rRNA + S-adenosyl-L-homocysteine + H(+). In terms of biological role, specifically methylates the guanosine in position 1516 of 16S rRNA. The polypeptide is Ribosomal RNA small subunit methyltransferase J (Psychrobacter arcticus (strain DSM 17307 / VKM B-2377 / 273-4)).